The following is a 211-amino-acid chain: Arginine exporter protein ArgO (211 aa).

Transmembrane regions (helical) follow at residues 1 to 21 (MFTYYFQGLALGAAMILPLGP), 37 to 57 (LMIALLCAVSDLLLICAGIFG), 68 to 88 (LLAIVTWGGVAFLLWYGFGAL), 111 to 131 (IIITMLAVTWLNPHVYLDTFV), 147 to 167 (WFALGTISASFLWFFGLALLA), and 182 to 202 (IINIVVGAVMWFIAFQLAKEG).

It belongs to the LysE/ArgO transporter (TC 2.A.75) family.

It localises to the cell inner membrane. The catalysed reaction is L-arginine(in) = L-arginine(out). In terms of biological role, involved in the export of arginine. Important to control the intracellular level of arginine and the correct balance between arginine and lysine. This Klebsiella pneumoniae (strain 342) protein is Arginine exporter protein ArgO.